The chain runs to 30 residues: GAIKDALKGAAKTVAVELLKKAQCKLEKTC.

The cysteines at positions 24 and 30 are disulfide-linked.

Expressed by the skin glands.

It localises to the secreted. Its function is as follows. Has antibacterial activity against the Gram-positive bacterium S.aureus ATCC 25923 (MIC=18 uM) and the Gram-negative bacterium E.coli ATCC 25726 (MIC=18 uM). The protein is Brevinin-2PTa of Pulchrana picturata (Malaysian fire frog).